The following is a 151-amino-acid chain: MSTPDNRSVNFFSLFRRGQHYAKTWPMEKRLAPVFVENRVIRMTRYAIRFMPPVAVFTLCWQIALGGQLGPAVATALFALSLPMQGLWWLGKRSLTPLPPSILNWFYEVRGKLQEAGQALAPVEGKPDYQALADTLKRAFKQLDKTFLDDL.

Topologically, residues 1-45 (MSTPDNRSVNFFSLFRRGQHYAKTWPMEKRLAPVFVENRVIRMTR) are cytoplasmic. A helical membrane pass occupies residues 46–65 (YAIRFMPPVAVFTLCWQIAL). The Periplasmic segment spans residues 66 to 68 (GGQ). The chain crosses the membrane as a helical span at residues 69-91 (LGPAVATALFALSLPMQGLWWLG). Topologically, residues 92-151 (KRSLTPLPPSILNWFYEVRGKLQEAGQALAPVEGKPDYQALADTLKRAFKQLDKTFLDDL) are cytoplasmic.

The protein belongs to the UPF0208 family.

Its subcellular location is the cell inner membrane. This chain is UPF0208 membrane protein YfbV (yfbV), found in Salmonella typhi.